Consider the following 327-residue polypeptide: GTPase Obg (327 aa).

An Obg domain is found at 2 to 160 (HILKDSLSIT…LNLRLELSLI (159 aa)). The 166-residue stretch at 161 to 326 (ADIGLVGFPN…LVSELFALSR (166 aa)) folds into the OBG-type G domain. Residues 167 to 174 (GFPNAGKS), 192 to 196 (FTTRF), 213 to 216 (DVPG), 280 to 283 (NKLD), and 307 to 309 (SIY) contribute to the GTP site. Mg(2+)-binding residues include Ser174 and Thr194.

The protein belongs to the TRAFAC class OBG-HflX-like GTPase superfamily. OBG GTPase family. As to quaternary structure, monomer. Mg(2+) is required as a cofactor.

Its subcellular location is the cytoplasm. An essential GTPase which binds GTP, GDP and possibly (p)ppGpp with moderate affinity, with high nucleotide exchange rates and a fairly low GTP hydrolysis rate. Plays a role in control of the cell cycle, stress response, ribosome biogenesis and in those bacteria that undergo differentiation, in morphogenesis control. The sequence is that of GTPase Obg from Borrelia hermsii (strain HS1 / DAH).